The following is a 72-amino-acid chain: Teretoxin Tan11.1 (72 aa).

Residues 1-21 (MLATKMSVTFCFLLMLTTVML) form the signal peptide. A propeptide spanning residues 22–31 (PTEAKTVAGR) is cleaved from the precursor.

This sequence belongs to the teretoxin H (TH) superfamily. Contains 4 disulfide bonds. As to expression, expressed by the venom duct.

The protein localises to the secreted. This chain is Teretoxin Tan11.1, found in Terebra anilis (Auger snail).